The chain runs to 848 residues: MKIHSSDHSWLLLAVLVILLSFSGALSSDDKEKKTKSVDKKKEVTYDGTSLIINGNRELLYSGSIHYPRSTPEMWPNIIKRAKQGGLNTIQTYVFWNVHEPEQGKFNFSGRADLVKFIKLIEKNGLYVTLRLGPFIQAEWTHGGLPYWLREVPGIFFRTDNEPFKEHTERYVKVVLDMMKEEKLFASQGGPIILGQIENEYSAVQRAYKEDGLNYIKWASKLVHSMDLGIPWVMCKQNDAPDPMINACNGRHCGDTFPGPNKDNKPSLWTENWTTQFRVFGDPPAQRSVEDIAYSVARFFSKNGTHVNYYMYHGGTNFGRTSAHYVTTRYYDDAPLDEFGLEREPKYGHLKHLHNALNLCKKALLWGQPRVEKPSNETEIRYYEQPGTKVCAAFLANNNTEAAEKIKFRGKEYLIPHRSISILPDCKTVVYNTGEIISHHTSRNFMKSKKANKNFDFKVFTESVPSKIKGDSFIPVELYGLTKDESDYGWYTTSFKIDDNDLSKKKGGKPNLRIASLGHALHVWLNGEYLGNGHGSHEEKSFVFQKPVTLKEGENHLTMLGVLTGFPDSGSYMEHRYTGPRSVSILGLGSGTLDLTEENKWGNKVGMEGERLGIHAEEGLKKVKWEKASGKEPGMTWYQTYFDAPESQSAAAIRMNGMGKGLIWVNGEGVGRYWMSFLSPLGQPTQIEYHIPRSFLKPKKNLLVIFEEEPNVKPELIDFVIVNRDTVCSYIGENYTPSVRHWTRKNDQVQAITDDVHLTANLKCSGTKKISAVEFASFGNPNGTCGNFTLGSCNAPVSKKVVEKYCLGKAECVIPVNKSTFEQDKKDSCPKVEKKLAVQVKCGRDKKN.

The first 27 residues, 1–27, serve as a signal peptide directing secretion; that stretch reads MKIHSSDHSWLLLAVLVILLSFSGALS. Asn107 carries N-linked (GlcNAc...) asparagine glycosylation. Glu200 functions as the Proton donor in the catalytic mechanism. Glu271 acts as the Nucleophile in catalysis. N-linked (GlcNAc...) asparagine glycosylation is found at Asn272, Asn303, Asn376, Asn398, Asn782, Asn787, and Asn817. The 90-residue stretch at 754-843 folds into the SUEL-type lectin domain; the sequence is DDVHLTANLK…KKLAVQVKCG (90 aa).

The protein belongs to the glycosyl hydrolase 35 family. As to expression, ubiquitous, with higher expression levels in roots, flowers and siliques.

It is found in the secreted. The protein resides in the extracellular space. The protein localises to the apoplast. It catalyses the reaction Hydrolysis of terminal non-reducing beta-D-galactose residues in beta-D-galactosides.. This Arabidopsis thaliana (Mouse-ear cress) protein is Beta-galactosidase 13 (BGAL13).